The sequence spans 342 residues: Dihydroorotate dehydrogenase (quinone) (342 aa).

Residues 61–65 (AGLDK) and T85 contribute to the FMN site. K65 lines the substrate pocket. 110 to 114 (NRMGF) lines the substrate pocket. The FMN site is built by N138 and N171. N171 contacts substrate. The active-site Nucleophile is the S174. N176 lines the substrate pocket. Residues K216 and T244 each coordinate FMN. 245-246 (NT) serves as a coordination point for substrate. Residues G267, G296, and 317-318 (YS) each bind FMN.

Belongs to the dihydroorotate dehydrogenase family. Type 2 subfamily. As to quaternary structure, monomer. FMN is required as a cofactor.

It is found in the cell membrane. It catalyses the reaction (S)-dihydroorotate + a quinone = orotate + a quinol. It functions in the pathway pyrimidine metabolism; UMP biosynthesis via de novo pathway; orotate from (S)-dihydroorotate (quinone route): step 1/1. Its function is as follows. Catalyzes the conversion of dihydroorotate to orotate with quinone as electron acceptor. In Pseudomonas paraeruginosa (strain DSM 24068 / PA7) (Pseudomonas aeruginosa (strain PA7)), this protein is Dihydroorotate dehydrogenase (quinone).